A 30-amino-acid chain; its full sequence is Kalata-B14 (30 aa).

A cross-link (cyclopeptide (Gly-Asp)) is located at residues 1–30 (GLPVCGESCFGGTCNTPGCACDPWPVCTRD). Intrachain disulfides connect C5/C19, C9/C21, and C14/C27.

In terms of processing, this is a cyclic peptide.

In terms of biological role, probably participates in a plant defense mechanism. This Oldenlandia affinis protein is Kalata-B14.